The chain runs to 332 residues: Cell division protein ZipA (332 aa).

Topologically, residues 1–6 are periplasmic; sequence MMQDLR. A helical membrane pass occupies residues 7 to 27; sequence LILIVVGAIAIIALLLHGLWT. The Cytoplasmic segment spans residues 28–332; sequence SRKERSSLFR…RLREVLENNA (305 aa). Basic and acidic residues-rich tracts occupy residues 34-51 and 61-72; these read SLFR…REQS and GEVRVRSAHPED. A disordered region spans residues 34-184; the sequence is SLFRDRPAKR…PAVAHEPQPA (151 aa). Low complexity predominate over residues 98 to 107; sequence PAPRAVQPAA. The segment covering 121 to 136 has biased composition (acidic residues); sequence DDILLDNYAQEEDDEP. The segment covering 155–171 has biased composition (low complexity); sequence PAAEPAFHAEPAHQPQP.

This sequence belongs to the ZipA family. Interacts with FtsZ via their C-terminal domains.

Its subcellular location is the cell inner membrane. Its function is as follows. Essential cell division protein that stabilizes the FtsZ protofilaments by cross-linking them and that serves as a cytoplasmic membrane anchor for the Z ring. Also required for the recruitment to the septal ring of downstream cell division proteins. The polypeptide is Cell division protein ZipA (Serratia proteamaculans (strain 568)).